The following is a 446-amino-acid chain: Maltoporin (446 aa).

A signal peptide spans 1-25; sequence MMITLRKLPLAVAVAAGVMSAQAMA.

The protein belongs to the porin LamB (TC 1.B.3) family. In terms of assembly, homotrimer formed of three 18-stranded antiparallel beta-barrels, containing three independent channels.

Its subcellular location is the cell outer membrane. The enzyme catalyses beta-maltose(in) = beta-maltose(out). In terms of biological role, involved in the transport of maltose and maltodextrins. The protein is Maltoporin of Escherichia coli O7:K1 (strain IAI39 / ExPEC).